Here is a 537-residue protein sequence, read N- to C-terminus: MKLLAVRRLLRIQSVVVRYRLDDLLFDQPLLPWWLRALGYLLPWRWLPRRRSEQPRAVRLRLALQDLGPIFIKFGQILSTRRDLLPEDIADELTWLQDRVPPFNPQQSVALIEEQLGARVDEAFARFDSEPLASASVAQVHAAQLKTGEEVVVKVVRPGLKAVIRQDLAWLYLFARLAERASTEARRLHLVDVVSDYEKTIYDELDLLREAANASQLKRNFEGSPLLYVPQIYWDWCRPKVLVMERIYGVPVTDLAALVDQGTDLKLLAERGVEIFFTQVFRDSFFHADMHPGNIFVSTRQPWDPQYIAIDCGIVGSLTPQDQDYLARNLLAFFKRDYRKVAQLHIDSGWVPADTQVNEFEAAIRTVCEPIFEKPLKDISFGQLLLRLFQTARRFNMEVQPQLVLLQKTLLNIEGLGRQLYPELDLWTTAKPFLERWMRKRMSPKAMLDNLQGQLEQLPHLAQMTRTALEDISRPAWDTRKRERHDHHLLRLLGAALLAGGVLLALQTPPTSANAWPSWLMLASGLYLLVGRRRLSD.

Residues 30 to 47 (LLPWWLRALGYLLPWRWL) traverse the membrane as a helical segment. The region spanning 126–490 (RFDSEPLASA…KRERHDHHLL (365 aa)) is the Protein kinase domain. ATP-binding positions include 132 to 140 (LASASVAQV) and Lys154. The Proton acceptor role is filled by Asp289. 2 helical membrane passes run 489–507 (LLRL…LALQ) and 513–530 (ANAW…YLLV).

The protein belongs to the ABC1 family. UbiB subfamily.

It localises to the cell inner membrane. Its pathway is cofactor biosynthesis; ubiquinone biosynthesis [regulation]. In terms of biological role, is probably a protein kinase regulator of UbiI activity which is involved in aerobic coenzyme Q (ubiquinone) biosynthesis. This is Probable protein kinase UbiB from Azotobacter vinelandii (strain DJ / ATCC BAA-1303).